A 447-amino-acid polypeptide reads, in one-letter code: Glutamate--tRNA ligase 1 (447 aa).

The 'HIGH' region motif lies at 10–20 (PSPTGMLHVGN). The short motif at 240–244 (KISKR) is the 'KMSKS' region element. Lysine 243 contacts ATP.

Belongs to the class-I aminoacyl-tRNA synthetase family. Glutamate--tRNA ligase type 1 subfamily. In terms of assembly, monomer.

It localises to the cytoplasm. The enzyme catalyses tRNA(Glu) + L-glutamate + ATP = L-glutamyl-tRNA(Glu) + AMP + diphosphate. Catalyzes the attachment of glutamate to tRNA(Glu) in a two-step reaction: glutamate is first activated by ATP to form Glu-AMP and then transferred to the acceptor end of tRNA(Glu). The polypeptide is Glutamate--tRNA ligase 1 (Rickettsia rickettsii (strain Sheila Smith)).